A 1033-amino-acid polypeptide reads, in one-letter code: Isoleucine--tRNA ligase 2 (1033 aa).

The 'HIGH' region signature appears at 47-57 (PTANGLPHVGH). The 'KMSKS' region signature appears at 590–594 (KMSKS). Residue K593 coordinates ATP.

It belongs to the class-I aminoacyl-tRNA synthetase family. IleS type 2 subfamily. As to quaternary structure, monomer. The cofactor is Zn(2+).

It localises to the cytoplasm. It catalyses the reaction tRNA(Ile) + L-isoleucine + ATP = L-isoleucyl-tRNA(Ile) + AMP + diphosphate. Its function is as follows. Catalyzes the attachment of isoleucine to tRNA(Ile). As IleRS can inadvertently accommodate and process structurally similar amino acids such as valine, to avoid such errors it has two additional distinct tRNA(Ile)-dependent editing activities. One activity is designated as 'pretransfer' editing and involves the hydrolysis of activated Val-AMP. The other activity is designated 'posttransfer' editing and involves deacylation of mischarged Val-tRNA(Ile). The polypeptide is Isoleucine--tRNA ligase 2 (Bacillus cereus (strain ZK / E33L)).